Consider the following 452-residue polypeptide: Probable M18 family aminopeptidase 1 (452 aa).

H93, H168, and H427 together coordinate Zn(2+).

It belongs to the peptidase M18 family. The cofactor is Zn(2+).

This is Probable M18 family aminopeptidase 1 (apeA) from Thermotoga neapolitana.